We begin with the raw amino-acid sequence, 441 residues long: Protein arginine methyltransferase NDUFAF7, mitochondrial (441 aa).

Residues Met-1–His-46 constitute a mitochondrion transit peptide.

The protein belongs to the NDUFAF7 family. In terms of assembly, interacts with NDUFS2.

It localises to the mitochondrion. The catalysed reaction is L-arginyl-[protein] + 2 S-adenosyl-L-methionine = N(omega),N(omega)'-dimethyl-L-arginyl-[protein] + 2 S-adenosyl-L-homocysteine + 2 H(+). Arginine methyltransferase involved in the assembly or stability of mitochondrial NADH:ubiquinone oxidoreductase complex (complex I). Acts by mediating symmetric dimethylation of 'Arg-118' of NDUFS2 after it assembles into the complex I, stabilizing the early intermediate complex. The chain is Protein arginine methyltransferase NDUFAF7, mitochondrial from Homo sapiens (Human).